The following is a 129-amino-acid chain: Glycine cleavage system H protein (129 aa).

One can recognise a Lipoyl-binding domain in the interval 24–106 (TYTVGITEHA…YAGGWIFKIK (83 aa)). At Lys65 the chain carries N6-lipoyllysine.

Belongs to the GcvH family. The glycine cleavage system is composed of four proteins: P, T, L and H. Requires (R)-lipoate as cofactor.

In terms of biological role, the glycine cleavage system catalyzes the degradation of glycine. The H protein shuttles the methylamine group of glycine from the P protein to the T protein. The protein is Glycine cleavage system H protein of Escherichia coli O127:H6 (strain E2348/69 / EPEC).